The chain runs to 750 residues: MTISPPEREANGKIVVDRDPVKTSFERWGKPGHFSRSLAKGPNTTTWIWNLHADAHDFDSHTNDLEDISRKVFSAHFGQLAVIFIWLSGMYFHGARFSNYEAWLSDPTHIKPSAQVVWPIVGQEILNGDVGGGFQGVQITSGFFQLWRASGIVNEQQLYTTAIGGLIAAGLMFFAGWFHYHKAAPKLEWFQNAESMMNHHLAGLLGLGSLSWAGHQIHVSLPVNQLLDAGVDPKEIPLPHEFVMNRELMAQLYPSFAKGLAPFFTLNWGEYSDFLTFRGGLNPVTGGLWLTDTVHHHVAIAVLFIVAGHMYRTNWGIGHSMKEILEAHKGPFTGEGHKGLYEILTTSWHAQLGLNLALMGSLSIIVAHHMYAMPPYPYLATDYGTQLSLFTHHMWIGGFCIVGGAAHAAIFMVRDYDPTNNYNNLLDRVIRHRDAIISHLNWVCIFLGFHSFGLYIHNDTMSALGRPQDMFSDTAIQLQPVFAQFVQNRNYLAPGFSAPNALASSSAVWGGDVVAVGGKVAMMPIQLGTSDFLVHHIHAFTIHVTVLILLKGVLFARSSRLIPDKANLGFRFPCDGPGRGGTCQVSAWDHVFLGLFWMYNCLSIVIFHFSWKMQSDVWGSVTAQGVSHITGGNFAQSANTINGWLRDFLWAQASQVIQSYGSALSAYGLMFLGAHFVWAFSLMFLFSGRGYWQELIESIVWAHNKLKVAPAIQPRALSITQGRAVGVAHYLLGGIATTWAFFLARIIAVG.

8 helical membrane passes run 72–95 (VFSA…FHGA), 158–181 (LYTT…FHYH), 197–221 (MNHH…HVSL), 293–311 (TVHH…GHMY), 348–371 (WHAQ…HHMY), 387–413 (LSLF…IFMV), 435–457 (AIIS…LYIH), and 532–550 (FLVH…LILL). [4Fe-4S] cluster is bound by residues C574 and C583. A run of 2 helical transmembrane segments spans residues 590-611 (HVFL…HFSW) and 664-686 (LSAY…MFLF). H675 lines the chlorophyll a' pocket. Chlorophyll a is bound by residues M683 and Y691. A phylloquinone-binding site is contributed by W692. A helical transmembrane segment spans residues 724–744 (AVGVAHYLLGGIATTWAFFLA).

The protein belongs to the PsaA/PsaB family. The PsaA/B heterodimer binds the P700 chlorophyll special pair and subsequent electron acceptors. PSI consists of a core antenna complex that captures photons, and an electron transfer chain that converts photonic excitation into a charge separation. The eukaryotic PSI reaction center is composed of at least 11 subunits. Requires P700 is a chlorophyll a/chlorophyll a' dimer, A0 is one or more chlorophyll a, A1 is one or both phylloquinones and FX is a shared 4Fe-4S iron-sulfur center. as cofactor.

The protein resides in the plastid. It is found in the chloroplast thylakoid membrane. The enzyme catalyses reduced [plastocyanin] + hnu + oxidized [2Fe-2S]-[ferredoxin] = oxidized [plastocyanin] + reduced [2Fe-2S]-[ferredoxin]. Its function is as follows. PsaA and PsaB bind P700, the primary electron donor of photosystem I (PSI), as well as the electron acceptors A0, A1 and FX. PSI is a plastocyanin-ferredoxin oxidoreductase, converting photonic excitation into a charge separation, which transfers an electron from the donor P700 chlorophyll pair to the spectroscopically characterized acceptors A0, A1, FX, FA and FB in turn. Oxidized P700 is reduced on the lumenal side of the thylakoid membrane by plastocyanin. This is Photosystem I P700 chlorophyll a apoprotein A1 from Mesostigma viride (Green alga).